Here is a 179-residue protein sequence, read N- to C-terminus: NADH:FAD oxidoreductase (179 aa).

48–51 is an FAD binding site; sequence TCSA. Residue 54–57 participates in NAD(+) binding; the sequence is SVCD. Residues 65 to 71, Ala-99, 104 to 109, and Ser-144 contribute to the FAD site; these read CINRKSY and VPMEER. Residues His-145 and 166 to 169 each bind NAD(+); that span reads YHRR. Tyr-166 serves as a coordination point for FAD.

It belongs to the non-flavoprotein flavin reductase family. Homodimer. The chlorophenol-4-monooxygenase is composed of an oxygenase component TftD and a reductase component TftC.

The catalysed reaction is FADH2 + NAD(+) = FAD + NADH + 2 H(+). It functions in the pathway xenobiotic degradation. Reductase component of a two-component system that degrades 2,4,5-trichlorophenol. TftC provides the FADH(2) required by TftD. TftD oxidizes 2,4,5-trichlorophenol (2,4,5-TCP) to 2,5-dichloro-p-benzoquinone, which is chemically reduced to 2,5-dichloro-p-hydroquinone (2,5-DiCHQ). Then, TftD oxidizes the latter to 5-chloro-2-hydroxy-p-benzoquinone. This chain is NADH:FAD oxidoreductase (tftC), found in Burkholderia cepacia (Pseudomonas cepacia).